The sequence spans 88 residues: CRISPR-associated endoribonuclease Cas2 2 (88 aa).

Aspartate 8 contributes to the Mg(2+) binding site.

Belongs to the CRISPR-associated endoribonuclease Cas2 protein family. As to quaternary structure, homodimer, forms a heterotetramer with a Cas1 homodimer. Mg(2+) serves as cofactor.

In terms of biological role, CRISPR (clustered regularly interspaced short palindromic repeat), is an adaptive immune system that provides protection against mobile genetic elements (viruses, transposable elements and conjugative plasmids). CRISPR clusters contain sequences complementary to antecedent mobile elements and target invading nucleic acids. CRISPR clusters are transcribed and processed into CRISPR RNA (crRNA). Functions as a ssRNA-specific endoribonuclease. Involved in the integration of spacer DNA into the CRISPR cassette. This Saccharolobus solfataricus (strain ATCC 35092 / DSM 1617 / JCM 11322 / P2) (Sulfolobus solfataricus) protein is CRISPR-associated endoribonuclease Cas2 2 (cas22).